The primary structure comprises 120 residues: Large ribosomal subunit protein uL18 (120 aa).

A disordered region spans residues 1 to 25 (MKQTRTAARQSRHQRIRRKVKGTSD). Basic residues predominate over residues 10 to 21 (QSRHQRIRRKVK).

Belongs to the universal ribosomal protein uL18 family. As to quaternary structure, part of the 50S ribosomal subunit; part of the 5S rRNA/L5/L18/L25 subcomplex. Contacts the 5S and 23S rRNAs.

This is one of the proteins that bind and probably mediate the attachment of the 5S RNA into the large ribosomal subunit, where it forms part of the central protuberance. The protein is Large ribosomal subunit protein uL18 of Thermosynechococcus vestitus (strain NIES-2133 / IAM M-273 / BP-1).